The following is a 281-amino-acid chain: Digeranylgeranylglyceryl phosphate synthase (281 aa).

Helical transmembrane passes span 88 to 108, 132 to 152, 200 to 220, 225 to 245, and 261 to 281; these read IALS…EFLI, ALVS…AGNL, GILV…PVIF, IIYL…ASAI, and LIKV…FRVV.

This sequence belongs to the UbiA prenyltransferase family. DGGGP synthase subfamily. Requires Mg(2+) as cofactor.

It is found in the cell membrane. The enzyme catalyses sn-3-O-(geranylgeranyl)glycerol 1-phosphate + (2E,6E,10E)-geranylgeranyl diphosphate = 2,3-bis-O-(geranylgeranyl)-sn-glycerol 1-phosphate + diphosphate. It functions in the pathway membrane lipid metabolism; glycerophospholipid metabolism. Its function is as follows. Prenyltransferase that catalyzes the transfer of the geranylgeranyl moiety of geranylgeranyl diphosphate (GGPP) to the C2 hydroxyl of (S)-3-O-geranylgeranylglyceryl phosphate (GGGP). This reaction is the second ether-bond-formation step in the biosynthesis of archaeal membrane lipids. This Korarchaeum cryptofilum (strain OPF8) protein is Digeranylgeranylglyceryl phosphate synthase.